A 364-amino-acid chain; its full sequence is Protein trichome birefringence-like 40 (364 aa).

Residues Leu-9–Ala-25 form a helical; Signal-anchor for type II membrane protein membrane-spanning segment. The short motif at Gly-118–Ser-120 is the GDS motif element. A DCXHWCLPGXXDXWN motif motif is present at residues Asp-341 to Asn-355.

The protein belongs to the PC-esterase family. TBL subfamily.

The protein resides in the membrane. Functionally, may act as a bridging protein that binds pectin and other cell wall polysaccharides. Probably involved in maintaining esterification of pectins. May be involved in the specific O-acetylation of cell wall polymers. The polypeptide is Protein trichome birefringence-like 40 (TBL40) (Arabidopsis thaliana (Mouse-ear cress)).